Here is a 482-residue protein sequence, read N- to C-terminus: BTB/POZ domain-containing protein 6-B (482 aa).

The 71-residue stretch at 80–150 (ADVHFVVGPP…MYSDEIELEA (71 aa)) folds into the BTB domain.

Interacts with cul3. Interacts (via BTB domain) with zbtb16/plzf. In terms of tissue distribution, in embryos, expressed in the cranial ganglia.

Its subcellular location is the cytoplasm. It is found in the nucleus. In terms of biological role, adapter protein for the cul3 E3 ubiquitin-protein ligase complex. Promotes the export of zbtb16/plzf from the nucleus to the cytoplasm and targets zbtb16/plzf for ubiquitination and degradation. Up-regulates neurog1 expression and antagonizes zbtb16/plzf, to promote neurogenesis. This Danio rerio (Zebrafish) protein is BTB/POZ domain-containing protein 6-B (btbd6b).